The following is a 159-amino-acid chain: Phosphopantetheine adenylyltransferase (159 aa).

Thr-10 contributes to the substrate binding site. ATP-binding positions include 10–11 (TF) and His-18. Substrate contacts are provided by Lys-42, Met-74, and Arg-88. ATP contacts are provided by residues 89–91 (GLR), Glu-99, and 124–130 (WSFISSS).

This sequence belongs to the bacterial CoaD family. As to quaternary structure, homohexamer. Mg(2+) serves as cofactor.

The protein resides in the cytoplasm. It carries out the reaction (R)-4'-phosphopantetheine + ATP + H(+) = 3'-dephospho-CoA + diphosphate. It participates in cofactor biosynthesis; coenzyme A biosynthesis; CoA from (R)-pantothenate: step 4/5. Its function is as follows. Reversibly transfers an adenylyl group from ATP to 4'-phosphopantetheine, yielding dephospho-CoA (dPCoA) and pyrophosphate. The sequence is that of Phosphopantetheine adenylyltransferase from Escherichia fergusonii (strain ATCC 35469 / DSM 13698 / CCUG 18766 / IAM 14443 / JCM 21226 / LMG 7866 / NBRC 102419 / NCTC 12128 / CDC 0568-73).